The sequence spans 142 residues: Large ribosomal subunit protein uL11 (142 aa).

This sequence belongs to the universal ribosomal protein uL11 family. As to quaternary structure, part of the ribosomal stalk of the 50S ribosomal subunit. Interacts with L10 and the large rRNA to form the base of the stalk. L10 forms an elongated spine to which L12 dimers bind in a sequential fashion forming a multimeric L10(L12)X complex. Post-translationally, one or more lysine residues are methylated.

Forms part of the ribosomal stalk which helps the ribosome interact with GTP-bound translation factors. The protein is Large ribosomal subunit protein uL11 of Bartonella henselae (strain ATCC 49882 / DSM 28221 / CCUG 30454 / Houston 1) (Rochalimaea henselae).